The following is a 317-amino-acid chain: Tyrosine--tRNA ligase (317 aa).

Residue tyrosine 33 participates in L-tyrosine binding. Residues 38–46 (PSGKIHMGH) carry the 'HIGH' region motif. Positions 155, 159, 162, and 177 each coordinate L-tyrosine. A 'KMSKS' region motif is present at residues 211–215 (KMASS). Residue serine 214 participates in ATP binding.

The protein belongs to the class-I aminoacyl-tRNA synthetase family. TyrS type 3 subfamily. As to quaternary structure, homodimer.

It localises to the cytoplasm. The catalysed reaction is tRNA(Tyr) + L-tyrosine + ATP = L-tyrosyl-tRNA(Tyr) + AMP + diphosphate + H(+). In terms of biological role, catalyzes the attachment of tyrosine to tRNA(Tyr) in a two-step reaction: tyrosine is first activated by ATP to form Tyr-AMP and then transferred to the acceptor end of tRNA(Tyr). The chain is Tyrosine--tRNA ligase from Methanosarcina barkeri (strain Fusaro / DSM 804).